Consider the following 298-residue polypeptide: HTH-type transcriptional regulator ArgP (298 aa).

The region spanning Leu4–Thr60 is the HTH lysR-type domain. Residues Phe21 to Lys40 constitute a DNA-binding region (H-T-H motif).

It belongs to the LysR transcriptional regulatory family. As to quaternary structure, homodimer.

Functionally, controls the transcription of genes involved in arginine and lysine metabolism. The polypeptide is HTH-type transcriptional regulator ArgP (Vibrio vulnificus (strain CMCP6)).